Consider the following 237-residue polypeptide: uncharacterized protein (237 aa).

The signal sequence occupies residues Met1–Ala27. Cys28 is lipidated: N-palmitoyl cysteine. Cys28 is lipidated: S-diacylglycerol cysteine.

This sequence belongs to the MG307/MG309/MG338 family.

It is found in the membrane. This is an uncharacterized protein from Mycoplasma pneumoniae (strain ATCC 29342 / M129 / Subtype 1) (Mycoplasmoides pneumoniae).